A 282-amino-acid chain; its full sequence is Phosphatidylglycerol--prolipoprotein diacylglyceryl transferase (282 aa).

Transmembrane regions (helical) follow at residues 18–38, 55–75, and 89–109; these read LSIK…YFIA, VIFY…VIFQ, and IWHG…TGII. Residue arginine 137 coordinates a 1,2-diacyl-sn-glycero-3-phospho-(1'-sn-glycerol). 2 helical membrane-spanning segments follow: residues 203–223 and 235–255; these read VGET…FVEG and IRVA…ILIY.

This sequence belongs to the Lgt family.

It localises to the cell membrane. It carries out the reaction L-cysteinyl-[prolipoprotein] + a 1,2-diacyl-sn-glycero-3-phospho-(1'-sn-glycerol) = an S-1,2-diacyl-sn-glyceryl-L-cysteinyl-[prolipoprotein] + sn-glycerol 1-phosphate + H(+). It functions in the pathway protein modification; lipoprotein biosynthesis (diacylglyceryl transfer). Catalyzes the transfer of the diacylglyceryl group from phosphatidylglycerol to the sulfhydryl group of the N-terminal cysteine of a prolipoprotein, the first step in the formation of mature lipoproteins. This is Phosphatidylglycerol--prolipoprotein diacylglyceryl transferase from Staphylococcus haemolyticus (strain JCSC1435).